Here is a 61-residue protein sequence, read N- to C-terminus: UPF0434 protein Pmen_1615 (61 aa).

Belongs to the UPF0434 family.

This Ectopseudomonas mendocina (strain ymp) (Pseudomonas mendocina) protein is UPF0434 protein Pmen_1615.